A 229-amino-acid polypeptide reads, in one-letter code: Probable transmembrane reductase CYB561D1 (229 aa).

Over 1–24 (MQPLEVGLVPAPAGEPRLTRWLRR) the chain is Cytoplasmic. Residues 22–224 (LRRGSGILAH…HQISRSYLPR (203 aa)) form the Cytochrome b561 domain. Residues 25–45 (GSGILAHLVALGFTIFLTALS) traverse the membrane as a helical segment. Topologically, residues 46-53 (RPGTSLFS) are lumenal. A helical membrane pass occupies residues 54-74 (WHPVFMALAFCLCMAEAILLF). Residue H55 coordinates heme b. The Cytoplasmic segment spans residues 75-91 (SPEHSLFFFCSRKARIR). The chain crosses the membrane as a helical span at residues 92 to 112 (LHWAGQTLAILCAALGLGFII). Residues H93 and H127 each contribute to the heme b site. At 113-128 (SSRTRSELPHLVSWHS) the chain is on the lumenal side. The helical transmembrane segment at 129–149 (WVGALTLLATAVQALCGLCLL) threads the bilayer. At 150 to 169 (CPRAARVSRVARLKLYHLTC) the chain is on the cytoplasmic side. Heme b is bound at residue H166. A helical membrane pass occupies residues 170–190 (GLVVYLMATVTVLLGMYSVWF). Topologically, residues 191–193 (QAQ) are lumenal. The helical transmembrane segment at 194-214 (IKGAAWYLCLALPVYPALVIM) threads the bilayer. Topologically, residues 215–229 (HQISRSYLPRKKMEM) are cytoplasmic.

Heme b is required as a cofactor.

It is found in the membrane. It catalyses the reaction monodehydro-L-ascorbate radical(out) + L-ascorbate(in) = monodehydro-L-ascorbate radical(in) + L-ascorbate(out). It carries out the reaction Fe(3+)(out) + L-ascorbate(in) = monodehydro-L-ascorbate radical(in) + Fe(2+)(out) + H(+). Its function is as follows. Probable transmembrane reductase that may use ascorbate as an electron donor and transfer electrons across membranes to reduce monodehydro-L-ascorbate radical and iron cations Fe(3+) in another cellular compartment. This chain is Probable transmembrane reductase CYB561D1, found in Homo sapiens (Human).